The primary structure comprises 109 residues: uncharacterized protein (109 aa).

Residues Ser-82–Thr-102 form a helical membrane-spanning segment.

It localises to the membrane. This is an uncharacterized protein from Saccharomyces cerevisiae (strain ATCC 204508 / S288c) (Baker's yeast).